A 760-amino-acid polypeptide reads, in one-letter code: Armadillo-like helical domain-containing protein 4 (760 aa).

Positions 1–27 (MSRPIVLHICLAFCSLLLLNFAAQCLA) are cleaved as a signal peptide. Topologically, residues 28-700 (FPNLERREIV…KDKAGYMSGM (673 aa)) are extracellular. Disordered stretches follow at residues 49–69 (LNTD…SGDP), 117–143 (GEEV…LTNP), 216–243 (RTEK…TEPS), 373–392 (HGGE…PMGD), 474–495 (TRGE…DAPR), and 536–652 (NEEL…SQEP). Asn56 is a glycosylation site (N-linked (GlcNAc...) asparagine). Positions 216 to 228 (RTEKFEANPEHKT) are enriched in basic and acidic residues. Polar residues predominate over residues 380-390 (DQSSVTPTSPM). A compositionally biased stretch (basic and acidic residues) spans 474–484 (TRGEDETKGGR). Positions 594 to 635 (LESEEGEDDEDEEDEEEEDEEEEDEEEDEEDKDADSLDEALG) are enriched in acidic residues. The chain crosses the membrane as a helical span at residues 701–721 (LVPVGVGIAGALFILGALYSI). At 722–760 (KVMNRRRRNGFKRHKRKQREFNSMQDRVMLLADSSEDEF) the chain is on the cytoplasmic side. Phosphoserine is present on residues Ser755 and Ser756.

As to quaternary structure, interacts with IL6ST; this interaction prevents IL6ST protein homodimerization and bridges ARMH4 with IL6R and STAT3 and therefore inhibits phosphorylation of STAT3 at 'Tyr-705'. Interacts (via cytoplasmic tail) with RICTOR; this interaction bridges ARMH4 to the mTORC2 complex and inhibits the mTORC2 kinase activity.

The protein resides in the membrane. Its function is as follows. May modulate immune response and may play a role in inflammation. Down-modulates STAT3 signaling throught direct interaction with IL6ST, resulting in the inhibition of phosphorylation of STAT3 at Tyr-705. May negatively regulates AKT signaling by modulating the activity of mTORC2 complex through RICTOR interaction. This Bos taurus (Bovine) protein is Armadillo-like helical domain-containing protein 4.